The chain runs to 583 residues: Threonine--tRNA ligase (583 aa).

The catalytic stretch occupies residues 185–478; that stretch reads DHRKLGRELN…LVEHYGGAFP (294 aa). The Zn(2+) site is built by cysteine 278, histidine 329, and histidine 455.

It belongs to the class-II aminoacyl-tRNA synthetase family. In terms of assembly, homodimer. Zn(2+) serves as cofactor.

It localises to the cytoplasm. The enzyme catalyses tRNA(Thr) + L-threonine + ATP = L-threonyl-tRNA(Thr) + AMP + diphosphate + H(+). Catalyzes the attachment of threonine to tRNA(Thr) in a two-step reaction: L-threonine is first activated by ATP to form Thr-AMP and then transferred to the acceptor end of tRNA(Thr). Also edits incorrectly charged L-seryl-tRNA(Thr). In Borrelia duttonii (strain Ly), this protein is Threonine--tRNA ligase.